Here is a 212-residue protein sequence, read N- to C-terminus: HTH-type transcriptional regulatory protein RaaS (212 aa).

The HTH tetR-type domain maps to 6–65 (LTAHARIREAAIEQFGRHGFGVGLRAIAEAAGVSAALVIHHFGSKEGLRKACDDFVAEEI). Residues 28 to 47 (GLRAIAEAAGVSAALVIHHF) constitute a DNA-binding region (H-T-H motif).

As to quaternary structure, homodimer. Interacts with long chain acyl-CoA derivatives. Interacts with several drugs such rhodamine 6G, ethidium and safranin O.

With respect to regulation, interaction with long chain acyl-CoA derivatives (oleoyl-CoA and, to lesser extent, stearoyl-CoA) prevents binding to DNA, leading to the expression of the target genes. Long chain acyl-CoA derivatives may serve as biological indicators of the bacterial metabolic state. Its function is as follows. Regulates the expression of the Rv1217c-Rv1218c multidrug efflux system and its own expression. Acts by binding to promoter regions of Rv1219c and upstream of the Rv1218c gene. Important for survival in prolonged stationary phase and during macrophage infection. May be used to eliminate non-growing mycobacteria. This Mycobacterium tuberculosis (strain ATCC 25618 / H37Rv) protein is HTH-type transcriptional regulatory protein RaaS.